Here is a 221-residue protein sequence, read N- to C-terminus: Thiamine-phosphate synthase (221 aa).

Residues 39-43 (QLRCK) and asparagine 76 each bind 4-amino-2-methyl-5-(diphosphooxymethyl)pyrimidine. Positions 77 and 96 each coordinate Mg(2+). A 4-amino-2-methyl-5-(diphosphooxymethyl)pyrimidine-binding site is contributed by serine 114. Residue 140-142 (TPT) participates in 2-[(2R,5Z)-2-carboxy-4-methylthiazol-5(2H)-ylidene]ethyl phosphate binding. Lysine 143 serves as a coordination point for 4-amino-2-methyl-5-(diphosphooxymethyl)pyrimidine. Glycine 171 is a binding site for 2-[(2R,5Z)-2-carboxy-4-methylthiazol-5(2H)-ylidene]ethyl phosphate.

This sequence belongs to the thiamine-phosphate synthase family. Requires Mg(2+) as cofactor.

It carries out the reaction 2-[(2R,5Z)-2-carboxy-4-methylthiazol-5(2H)-ylidene]ethyl phosphate + 4-amino-2-methyl-5-(diphosphooxymethyl)pyrimidine + 2 H(+) = thiamine phosphate + CO2 + diphosphate. It catalyses the reaction 2-(2-carboxy-4-methylthiazol-5-yl)ethyl phosphate + 4-amino-2-methyl-5-(diphosphooxymethyl)pyrimidine + 2 H(+) = thiamine phosphate + CO2 + diphosphate. The catalysed reaction is 4-methyl-5-(2-phosphooxyethyl)-thiazole + 4-amino-2-methyl-5-(diphosphooxymethyl)pyrimidine + H(+) = thiamine phosphate + diphosphate. The protein operates within cofactor biosynthesis; thiamine diphosphate biosynthesis; thiamine phosphate from 4-amino-2-methyl-5-diphosphomethylpyrimidine and 4-methyl-5-(2-phosphoethyl)-thiazole: step 1/1. Its function is as follows. Condenses 4-methyl-5-(beta-hydroxyethyl)thiazole monophosphate (THZ-P) and 2-methyl-4-amino-5-hydroxymethyl pyrimidine pyrophosphate (HMP-PP) to form thiamine monophosphate (TMP). This Deinococcus geothermalis (strain DSM 11300 / CIP 105573 / AG-3a) protein is Thiamine-phosphate synthase.